We begin with the raw amino-acid sequence, 962 residues long: Glycine dehydrogenase (decarboxylating) (962 aa).

Lys709 carries the post-translational modification N6-(pyridoxal phosphate)lysine.

Belongs to the GcvP family. In terms of assembly, the glycine cleavage system is composed of four proteins: P, T, L and H. It depends on pyridoxal 5'-phosphate as a cofactor.

The catalysed reaction is N(6)-[(R)-lipoyl]-L-lysyl-[glycine-cleavage complex H protein] + glycine + H(+) = N(6)-[(R)-S(8)-aminomethyldihydrolipoyl]-L-lysyl-[glycine-cleavage complex H protein] + CO2. Functionally, the glycine cleavage system catalyzes the degradation of glycine. The P protein binds the alpha-amino group of glycine through its pyridoxal phosphate cofactor; CO(2) is released and the remaining methylamine moiety is then transferred to the lipoamide cofactor of the H protein. The protein is Glycine dehydrogenase (decarboxylating) of Shewanella baltica (strain OS155 / ATCC BAA-1091).